We begin with the raw amino-acid sequence, 121 residues long: Large ribosomal subunit protein uL14 (121 aa).

Belongs to the universal ribosomal protein uL14 family. As to quaternary structure, part of the 50S ribosomal subunit. Forms a cluster with proteins L3 and L19. In the 70S ribosome, L14 and L19 interact and together make contacts with the 16S rRNA in bridges B5 and B8.

Binds to 23S rRNA. Forms part of two intersubunit bridges in the 70S ribosome. The protein is Large ribosomal subunit protein uL14 of Synechococcus sp. (strain CC9605).